An 839-amino-acid chain; its full sequence is Elongation factor 2 (839 aa).

Positions 17–248 (ENIRNMSVIA…MGRLWGDSYF (232 aa)) constitute a tr-type G domain. Residues 26–33 (AHVDHGKT), 156–159 (NKVD), and 211–213 (SGL) contribute to the GTP site. Residue His698 is modified to Diphthamide.

This sequence belongs to the TRAFAC class translation factor GTPase superfamily. Classic translation factor GTPase family. EF-G/EF-2 subfamily. In terms of processing, phosphorylation by EF-2 kinase completely inactivates EF-2.

The protein resides in the cytoplasm. It catalyses the reaction GTP + H2O = GDP + phosphate + H(+). Catalyzes the GTP-dependent ribosomal translocation step during translation elongation. During this step, the ribosome changes from the pre-translocational (PRE) to the post-translocational (POST) state as the newly formed A-site-bound peptidyl-tRNA and P-site-bound deacylated tRNA move to the P and E sites, respectively. Catalyzes the coordinated movement of the two tRNA molecules, the mRNA and conformational changes in the ribosome. This Dictyostelium discoideum (Social amoeba) protein is Elongation factor 2 (efbA).